Consider the following 556-residue polypeptide: Formate--tetrahydrofolate ligase (556 aa).

Thr65–Thr72 lines the ATP pocket.

Belongs to the formate--tetrahydrofolate ligase family.

The catalysed reaction is (6S)-5,6,7,8-tetrahydrofolate + formate + ATP = (6R)-10-formyltetrahydrofolate + ADP + phosphate. The protein operates within one-carbon metabolism; tetrahydrofolate interconversion. The polypeptide is Formate--tetrahydrofolate ligase (Kosmotoga olearia (strain ATCC BAA-1733 / DSM 21960 / TBF 19.5.1)).